The chain runs to 447 residues: UPF0210 protein Ldb1026 (447 aa).

Belongs to the UPF0210 family. As to quaternary structure, homodimer.

The protein is UPF0210 protein Ldb1026 of Lactobacillus delbrueckii subsp. bulgaricus (strain ATCC 11842 / DSM 20081 / BCRC 10696 / JCM 1002 / NBRC 13953 / NCIMB 11778 / NCTC 12712 / WDCM 00102 / Lb 14).